Consider the following 121-residue polypeptide: Autophagy-related protein 8f (121 aa).

A lipid anchor (Phosphatidylethanolamine amidated glycine) is attached at glycine 117. Residues 118-121 constitute a propeptide, removed in mature form; it reads FGSP.

It belongs to the ATG8 family. As to quaternary structure, interacts with ATG4. Interacts with NBR1. Interacts with ATI1 and ATI2. Interacts with SH3P2. The C-terminal 4 residues are removed by ATG4 to expose Gly-117 at the C-terminus. This Gly-117 forms then a thioester bond with the 'Cys-558' of ATG7 (E1-like activating enzyme) before being transferred to the 'Cys-258' of ATG3 (the specific E2 conjugating enzyme), in order to be finally amidated with phosphatidylethanolamine. This lipid modification anchors ATG8 to autophagosomes. Constitutively expressed.

It localises to the cytoplasmic vesicle. The protein localises to the autophagosome membrane. It is found in the vacuole membrane. The protein resides in the cytoplasm. Its subcellular location is the cytoskeleton. In terms of biological role, ubiquitin-like modifier involved in autophagosomes formation. May mediate the delivery of the autophagosomes to the vacuole via the microtubule cytoskeleton. The sequence is that of Autophagy-related protein 8f (ATG8F) from Arabidopsis thaliana (Mouse-ear cress).